The chain runs to 158 residues: Protein Smg homolog (158 aa).

The protein belongs to the Smg family.

The polypeptide is Protein Smg homolog (Shewanella oneidensis (strain ATCC 700550 / JCM 31522 / CIP 106686 / LMG 19005 / NCIMB 14063 / MR-1)).